Reading from the N-terminus, the 386-residue chain is L-prolyl-[peptidyl-carrier protein] dehydrogenase (386 aa).

Residues 125–134 and 158–160 each bind FAD; these read NAATEPDAGS and FIT. Glu-244 acts as the Proton acceptor in catalysis. Residues Arg-270, Gln-281, 338-342, and 367-369 each bind FAD; these read QTFGG and TND.

It belongs to the acyl-CoA dehydrogenase family. The cofactor is FAD.

It catalyses the reaction L-prolyl-[peptidyl-carrier protein] + 2 oxidized [electron-transfer flavoprotein] + H(+) = (1H-pyrrole-2-carbonyl)-[peptidyl-carrier protein] + 2 reduced [electron-transfer flavoprotein]. The protein operates within antibiotic biosynthesis; prodigiosin biosynthesis. Its function is as follows. Involved in the biosynthesis of 4-methoxy-2,2'-bipyrrole-5-carbaldehyde (MBC), one of the terminal products involved in the biosynthesis of the red antibiotic prodigiosin (Pig). Catalyzes the desaturation of the L-prolyl-[PigG] to yield 1H-pyrrole-2-carbonyl-[PigG]. The polypeptide is L-prolyl-[peptidyl-carrier protein] dehydrogenase (Serratia sp. (strain ATCC 39006) (Prodigiosinella confusarubida)).